Here is a 335-residue protein sequence, read N- to C-terminus: Probable deoxyhypusine synthase (335 aa).

The active-site Nucleophile is the Lys-307.

Belongs to the deoxyhypusine synthase family. NAD(+) serves as cofactor.

The catalysed reaction is [eIF5A protein]-L-lysine + spermidine = [eIF5A protein]-deoxyhypusine + propane-1,3-diamine. Its pathway is protein modification; eIF5A hypusination. Catalyzes the NAD-dependent oxidative cleavage of spermidine and the subsequent transfer of the butylamine moiety of spermidine to the epsilon-amino group of a specific lysine residue of the eIF-5A precursor protein to form the intermediate deoxyhypusine residue. This chain is Probable deoxyhypusine synthase (dys), found in Pyrococcus abyssi (strain GE5 / Orsay).